Consider the following 149-residue polypeptide: D-aminoacyl-tRNA deacylase (149 aa).

A Gly-cisPro motif, important for rejection of L-amino acids motif is present at residues 137-138 (GP).

Belongs to the DTD family. As to quaternary structure, homodimer.

It is found in the cytoplasm. It catalyses the reaction glycyl-tRNA(Ala) + H2O = tRNA(Ala) + glycine + H(+). The catalysed reaction is a D-aminoacyl-tRNA + H2O = a tRNA + a D-alpha-amino acid + H(+). Its function is as follows. An aminoacyl-tRNA editing enzyme that deacylates mischarged D-aminoacyl-tRNAs. Also deacylates mischarged glycyl-tRNA(Ala), protecting cells against glycine mischarging by AlaRS. Acts via tRNA-based rather than protein-based catalysis; rejects L-amino acids rather than detecting D-amino acids in the active site. By recycling D-aminoacyl-tRNA to D-amino acids and free tRNA molecules, this enzyme counteracts the toxicity associated with the formation of D-aminoacyl-tRNA entities in vivo and helps enforce protein L-homochirality. The polypeptide is D-aminoacyl-tRNA deacylase (Clostridium botulinum (strain Loch Maree / Type A3)).